The following is a 161-amino-acid chain: ATP synthase subunit b' (161 aa).

A helical membrane pass occupies residues 26-45 (LPLMAIQFLLLAFVLDKIFY).

This sequence belongs to the ATPase B chain family. F-type ATPases have 2 components, F(1) - the catalytic core - and F(0) - the membrane proton channel. F(1) has five subunits: alpha(3), beta(3), gamma(1), delta(1), epsilon(1). F(0) has four main subunits: a(1), b(1), b'(1) and c(10-14). The alpha and beta chains form an alternating ring which encloses part of the gamma chain. F(1) is attached to F(0) by a central stalk formed by the gamma and epsilon chains, while a peripheral stalk is formed by the delta, b and b' chains.

It is found in the cellular thylakoid membrane. In terms of biological role, f(1)F(0) ATP synthase produces ATP from ADP in the presence of a proton or sodium gradient. F-type ATPases consist of two structural domains, F(1) containing the extramembraneous catalytic core and F(0) containing the membrane proton channel, linked together by a central stalk and a peripheral stalk. During catalysis, ATP synthesis in the catalytic domain of F(1) is coupled via a rotary mechanism of the central stalk subunits to proton translocation. Its function is as follows. Component of the F(0) channel, it forms part of the peripheral stalk, linking F(1) to F(0). The b'-subunit is a diverged and duplicated form of b found in plants and photosynthetic bacteria. The protein is ATP synthase subunit b' of Trichodesmium erythraeum (strain IMS101).